The chain runs to 591 residues: 2-succinyl-5-enolpyruvyl-6-hydroxy-3-cyclohexene-1-carboxylate synthase (591 aa).

This sequence belongs to the TPP enzyme family. MenD subfamily. Homodimer. It depends on Mg(2+) as a cofactor. The cofactor is Mn(2+). Requires thiamine diphosphate as cofactor.

The enzyme catalyses isochorismate + 2-oxoglutarate + H(+) = 5-enolpyruvoyl-6-hydroxy-2-succinyl-cyclohex-3-ene-1-carboxylate + CO2. The protein operates within quinol/quinone metabolism; 1,4-dihydroxy-2-naphthoate biosynthesis; 1,4-dihydroxy-2-naphthoate from chorismate: step 2/7. It functions in the pathway cofactor biosynthesis; phylloquinone biosynthesis. Catalyzes the thiamine diphosphate-dependent decarboxylation of 2-oxoglutarate and the subsequent addition of the resulting succinic semialdehyde-thiamine pyrophosphate anion to isochorismate to yield 2-succinyl-5-enolpyruvyl-6-hydroxy-3-cyclohexene-1-carboxylate (SEPHCHC). This Rippkaea orientalis (strain PCC 8801 / RF-1) (Cyanothece sp. (strain PCC 8801)) protein is 2-succinyl-5-enolpyruvyl-6-hydroxy-3-cyclohexene-1-carboxylate synthase.